The sequence spans 90 residues: Elongation factor 1-beta (90 aa).

This sequence belongs to the EF-1-beta/EF-1-delta family.

In terms of biological role, promotes the exchange of GDP for GTP in EF-1-alpha/GDP, thus allowing the regeneration of EF-1-alpha/GTP that could then be used to form the ternary complex EF-1-alpha/GTP/AAtRNA. This chain is Elongation factor 1-beta, found in Staphylothermus marinus (strain ATCC 43588 / DSM 3639 / JCM 9404 / F1).